The following is a 526-amino-acid chain: AAA ATPase forming ring-shaped complexes (526 aa).

Positions 1–18 are enriched in polar residues; it reads MGDMASSTDPAAHNSFSD. The disordered stretch occupies residues 1-20; it reads MGDMASSTDPAAHNSFSDFN. Residues 20–59 adopt a coiled-coil conformation; that stretch reads NREEMTRLADNVRSLQRTNQDLSARNTKLAEMLKSSRDKL. Residue 257–262 coordinates ATP; the sequence is GCGKTL.

Belongs to the AAA ATPase family. Homohexamer. Assembles into a hexameric ring structure.

This Corynebacterium efficiens (strain DSM 44549 / YS-314 / AJ 12310 / JCM 11189 / NBRC 100395) protein is AAA ATPase forming ring-shaped complexes.